A 271-amino-acid polypeptide reads, in one-letter code: Ribosomal RNA small subunit methyltransferase A (271 aa).

6 residues coordinate S-adenosyl-L-methionine: histidine 11, leucine 13, glycine 38, glutamate 59, aspartate 84, and asparagine 109.

Belongs to the class I-like SAM-binding methyltransferase superfamily. rRNA adenine N(6)-methyltransferase family. RsmA subfamily.

Its subcellular location is the cytoplasm. It carries out the reaction adenosine(1518)/adenosine(1519) in 16S rRNA + 4 S-adenosyl-L-methionine = N(6)-dimethyladenosine(1518)/N(6)-dimethyladenosine(1519) in 16S rRNA + 4 S-adenosyl-L-homocysteine + 4 H(+). Its function is as follows. Specifically dimethylates two adjacent adenosines (A1518 and A1519) in the loop of a conserved hairpin near the 3'-end of 16S rRNA in the 30S particle. May play a critical role in biogenesis of 30S subunits. The polypeptide is Ribosomal RNA small subunit methyltransferase A (Nostoc sp. (strain PCC 7120 / SAG 25.82 / UTEX 2576)).